The following is a 250-amino-acid chain: N-acyl homoserine lactonase (250 aa).

7 residues coordinate Zn(2+): histidine 104, histidine 106, aspartate 108, histidine 109, histidine 169, aspartate 191, and histidine 235.

Belongs to the metallo-beta-lactamase superfamily. Monomer. The cofactor is Zn(2+).

The enzyme catalyses an N-acyl-L-homoserine lactone + H2O = an N-acyl-L-homoserine + H(+). Completely inhibited by Cu(2+) and Ag(+). Partially inhibited by Cr(2+), Pb(2+) and Fe(2+). Mg(2+), Ca(2+), Mn(2+), Co(2+), Ni(2+), Zn(2+) and Cd(2+) have no effect on activity. The chelating agents EDTA, 2,2'bipyridine and o-phenanthroline have no effect on enzyme activity. Hydrolyzes acyl homoserine lactones with varying lengths of acyl chains, with a slight preference for substrates without 3-oxo substitution at the C3 position. Has only residual activity towards non-acyl lactones, and no activity towards non-cyclic esters. The sequence is that of N-acyl homoserine lactonase from Bacillus sp.